Reading from the N-terminus, the 375-residue chain is MSCPVIELTQQLIRRPSLSPDDAGCQALLIERLQAIGFTVERMDFADTQNFWAWRGQGETLAFAGHTDVVPPGDADRWINPPFEPTIRDGMLFGRGAADMKGSLAAMVVAAERFVAQHPNHTGRLAFLITSDEEASAHNGTVKAVEALMARNERLDYCLVGEPSSIEVVGDVVKNGRRGSLTCNLTIHGVQGHVAYPHLADNPVHRAAPFLNELVAIEWDQGNEFFPATSMQIANIQAGTGSNNVIPGELFVQFNFRFSTELTDEMIKAQVLALLEKHQLRYTVDWWLSGQPFLTARGKLVDAVVNAVEHYNEIKPQLLTTGGTSDGRFIARMGAQVVELGPVNATIHKINECVNAADLQLLARMYQRIMEQLVA.

His66 is a Zn(2+) binding site. Asp68 is a catalytic residue. A Zn(2+)-binding site is contributed by Asp99. Glu133 functions as the Proton acceptor in the catalytic mechanism. Zn(2+) is bound by residues Glu134, Glu162, and His348.

The protein belongs to the peptidase M20A family. DapE subfamily. Homodimer. Requires Zn(2+) as cofactor. The cofactor is Co(2+).

It carries out the reaction N-succinyl-(2S,6S)-2,6-diaminopimelate + H2O = (2S,6S)-2,6-diaminopimelate + succinate. It functions in the pathway amino-acid biosynthesis; L-lysine biosynthesis via DAP pathway; LL-2,6-diaminopimelate from (S)-tetrahydrodipicolinate (succinylase route): step 3/3. Functionally, catalyzes the hydrolysis of N-succinyl-L,L-diaminopimelic acid (SDAP), forming succinate and LL-2,6-diaminopimelate (DAP), an intermediate involved in the bacterial biosynthesis of lysine and meso-diaminopimelic acid, an essential component of bacterial cell walls. The polypeptide is Succinyl-diaminopimelate desuccinylase (Escherichia coli O157:H7).